The following is a 431-amino-acid chain: Tol-Pal system protein TolB (431 aa).

Positions 1-26 (MRLMTKLGFRALVASCLIAAGGAANA) are cleaved as a signal peptide. The disordered stretch occupies residues 411-431 (PQILSVQGGSVREPSWGPFMQ).

Belongs to the TolB family. As to quaternary structure, the Tol-Pal system is composed of five core proteins: the inner membrane proteins TolA, TolQ and TolR, the periplasmic protein TolB and the outer membrane protein Pal. They form a network linking the inner and outer membranes and the peptidoglycan layer.

It is found in the periplasm. Its function is as follows. Part of the Tol-Pal system, which plays a role in outer membrane invagination during cell division and is important for maintaining outer membrane integrity. The sequence is that of Tol-Pal system protein TolB from Burkholderia ambifaria (strain MC40-6).